Reading from the N-terminus, the 55-residue chain is MAKAVTVKIKLVSTADTGYFYVTKKNSRTQTEKLTMRKYDPVARKHVEFKETKIK.

It belongs to the bacterial ribosomal protein bL33 family.

The chain is Large ribosomal subunit protein bL33 from Methylobacterium radiotolerans (strain ATCC 27329 / DSM 1819 / JCM 2831 / NBRC 15690 / NCIMB 10815 / 0-1).